The chain runs to 101 residues: ATP-dependent Clp protease adapter protein ClpS 2 (101 aa).

The protein belongs to the ClpS family. In terms of assembly, binds to the N-terminal domain of the chaperone ClpA.

Its function is as follows. Involved in the modulation of the specificity of the ClpAP-mediated ATP-dependent protein degradation. This chain is ATP-dependent Clp protease adapter protein ClpS 2, found in Mesorhizobium japonicum (strain LMG 29417 / CECT 9101 / MAFF 303099) (Mesorhizobium loti (strain MAFF 303099)).